Consider the following 747-residue polypeptide: E3 UFM1-protein ligase 1 homolog (747 aa).

Residues 403-468 (EKKKQCGSKA…GTVQVNSEEL (66 aa)) are disordered. A compositionally biased stretch (basic residues) spans 429–438 (GGKGGKKGGK). Residues 439-449 (GGKNGGGGGKG) are compositionally biased toward gly residues. The segment covering 450–465 (ATSSVPTGSGTVQVNS) has biased composition (polar residues).

The protein belongs to the UFL1 family.

Functionally, E3 UFM1-protein ligase that mediates ufmylation of target proteins. The chain is E3 UFM1-protein ligase 1 homolog (ufl-1) from Caenorhabditis briggsae.